Here is a 933-residue protein sequence, read N- to C-terminus: Phosphoenolpyruvate carboxylase (933 aa).

Catalysis depends on residues H158 and K592.

The protein belongs to the PEPCase type 1 family. The cofactor is Mg(2+).

The enzyme catalyses oxaloacetate + phosphate = phosphoenolpyruvate + hydrogencarbonate. Forms oxaloacetate, a four-carbon dicarboxylic acid source for the tricarboxylic acid cycle. In Nitrosomonas europaea (strain ATCC 19718 / CIP 103999 / KCTC 2705 / NBRC 14298), this protein is Phosphoenolpyruvate carboxylase.